A 270-amino-acid polypeptide reads, in one-letter code: Acyl-[acyl-carrier-protein]--UDP-N-acetylglucosamine O-acyltransferase (270 aa).

This sequence belongs to the transferase hexapeptide repeat family. LpxA subfamily. As to quaternary structure, homotrimer.

It localises to the cytoplasm. It catalyses the reaction a (3R)-hydroxyacyl-[ACP] + UDP-N-acetyl-alpha-D-glucosamine = a UDP-3-O-[(3R)-3-hydroxyacyl]-N-acetyl-alpha-D-glucosamine + holo-[ACP]. It functions in the pathway glycolipid biosynthesis; lipid IV(A) biosynthesis; lipid IV(A) from (3R)-3-hydroxytetradecanoyl-[acyl-carrier-protein] and UDP-N-acetyl-alpha-D-glucosamine: step 1/6. In terms of biological role, involved in the biosynthesis of lipid A, a phosphorylated glycolipid that anchors the lipopolysaccharide to the outer membrane of the cell. This chain is Acyl-[acyl-carrier-protein]--UDP-N-acetylglucosamine O-acyltransferase, found in Helicobacter pylori (strain G27).